The sequence spans 158 residues: Ribosome maturation factor RimP (158 aa).

Belongs to the RimP family.

The protein resides in the cytoplasm. In terms of biological role, required for maturation of 30S ribosomal subunits. The chain is Ribosome maturation factor RimP from Deinococcus radiodurans (strain ATCC 13939 / DSM 20539 / JCM 16871 / CCUG 27074 / LMG 4051 / NBRC 15346 / NCIMB 9279 / VKM B-1422 / R1).